Consider the following 136-residue polypeptide: Large ribosomal subunit protein bL17 (136 aa).

It belongs to the bacterial ribosomal protein bL17 family. As to quaternary structure, part of the 50S ribosomal subunit. Contacts protein L32.

The chain is Large ribosomal subunit protein bL17 from Rickettsia canadensis (strain McKiel).